A 558-amino-acid chain; its full sequence is Scarecrow-like protein 6 (558 aa).

A disordered region spans residues phenylalanine 19–cysteine 90. Positions serine 54–asparagine 75 are enriched in low complexity. One can recognise a GRAS domain in the interval lysine 196 to arginine 554. The interval valine 203–leucine 257 is leucine repeat I (LRI). The tract at residues tyrosine 276–isoleucine 340 is VHIID. The VHIID signature appears at leucine 307–aspartate 311. The segment at phenylalanine 356–proline 388 is leucine repeat II (LRII). The PFYRE stretch occupies residues valine 396 to lysine 479. Residues leucine 482 to arginine 554 form an SAW region.

This sequence belongs to the GRAS family. In terms of assembly, interacts with Meloidogyne incognita 16D10. Expressed in seedlings, roots, leaves, flowers and siliques.

Its subcellular location is the nucleus. Functionally, probable transcription factor involved in plant development. The protein is Scarecrow-like protein 6 (SCL6) of Arabidopsis thaliana (Mouse-ear cress).